A 491-amino-acid chain; its full sequence is Probable glycine dehydrogenase (decarboxylating) subunit 2 (491 aa).

Position 273 is an N6-(pyridoxal phosphate)lysine (lysine 273).

It belongs to the GcvP family. C-terminal subunit subfamily. In terms of assembly, the glycine cleavage system is composed of four proteins: P, T, L and H. In this organism, the P 'protein' is a heterodimer of two subunits. Pyridoxal 5'-phosphate is required as a cofactor.

It catalyses the reaction N(6)-[(R)-lipoyl]-L-lysyl-[glycine-cleavage complex H protein] + glycine + H(+) = N(6)-[(R)-S(8)-aminomethyldihydrolipoyl]-L-lysyl-[glycine-cleavage complex H protein] + CO2. The glycine cleavage system catalyzes the degradation of glycine. The P protein binds the alpha-amino group of glycine through its pyridoxal phosphate cofactor; CO(2) is released and the remaining methylamine moiety is then transferred to the lipoamide cofactor of the H protein. The chain is Probable glycine dehydrogenase (decarboxylating) subunit 2 from Bacillus cereus (strain G9842).